Consider the following 375-residue polypeptide: Thiamine-phosphate synthase (375 aa).

The interval 1–127 (MTNAESRTVL…AACIESIRYQ (127 aa)) is unknown. Residues 128 to 375 (CYATFRELEL…SSDVCPLPND (248 aa)) form a thiamine-phosphate synthase region. Residues 183-185 (QLR) and N215 each bind 4-amino-2-methyl-5-(diphosphooxymethyl)pyrimidine. Residues D216 and E235 each contribute to the Mg(2+) site. S254 and K283 together coordinate 4-amino-2-methyl-5-(diphosphooxymethyl)pyrimidine. G315 is a binding site for 2-[(2R,5Z)-2-carboxy-4-methylthiazol-5(2H)-ylidene]ethyl phosphate.

The protein belongs to the thiamine-phosphate synthase family. Mg(2+) is required as a cofactor.

It catalyses the reaction 2-[(2R,5Z)-2-carboxy-4-methylthiazol-5(2H)-ylidene]ethyl phosphate + 4-amino-2-methyl-5-(diphosphooxymethyl)pyrimidine + 2 H(+) = thiamine phosphate + CO2 + diphosphate. The enzyme catalyses 2-(2-carboxy-4-methylthiazol-5-yl)ethyl phosphate + 4-amino-2-methyl-5-(diphosphooxymethyl)pyrimidine + 2 H(+) = thiamine phosphate + CO2 + diphosphate. It carries out the reaction 4-methyl-5-(2-phosphooxyethyl)-thiazole + 4-amino-2-methyl-5-(diphosphooxymethyl)pyrimidine + H(+) = thiamine phosphate + diphosphate. It functions in the pathway cofactor biosynthesis; thiamine diphosphate biosynthesis; thiamine phosphate from 4-amino-2-methyl-5-diphosphomethylpyrimidine and 4-methyl-5-(2-phosphoethyl)-thiazole: step 1/1. Condenses 4-methyl-5-(beta-hydroxyethyl)thiazole monophosphate (THZ-P) and 2-methyl-4-amino-5-hydroxymethyl pyrimidine pyrophosphate (HMP-PP) to form thiamine monophosphate (TMP). The sequence is that of Thiamine-phosphate synthase (thiE) from Rhodopirellula baltica (strain DSM 10527 / NCIMB 13988 / SH1).